The chain runs to 254 residues: Probable phosphatase Sbal_1472 (254 aa).

9 residues coordinate Zn(2+): His8, His10, His16, His41, Glu74, His102, His132, Asp193, and His195.

The protein belongs to the PHP family. Requires Zn(2+) as cofactor.

The protein is Probable phosphatase Sbal_1472 of Shewanella baltica (strain OS155 / ATCC BAA-1091).